The chain runs to 39 residues: Mu-like prophage FluMu protein com (39 aa).

The protein belongs to the com family.

The chain is Mu-like prophage FluMu protein com from Haemophilus influenzae (strain ATCC 51907 / DSM 11121 / KW20 / Rd).